Reading from the N-terminus, the 537-residue chain is O-phosphoserine--tRNA(Cys) ligase (537 aa).

Residues 186 to 188 (HMT), 231 to 233 (SAS), 273 to 274 (YY), and Asn-317 contribute to the substrate site.

This sequence belongs to the class-II aminoacyl-tRNA synthetase family. O-phosphoseryl-tRNA(Cys) synthetase subfamily. Homotetramer. Interacts with SepCysS.

It catalyses the reaction tRNA(Cys) + O-phospho-L-serine + ATP = O-phospho-L-seryl-tRNA(Cys) + AMP + diphosphate. Catalyzes the attachment of O-phosphoserine (Sep) to tRNA(Cys). The protein is O-phosphoserine--tRNA(Cys) ligase of Methanococcus maripaludis (strain C7 / ATCC BAA-1331).